Here is a 611-residue protein sequence, read N- to C-terminus: MSAVSQPQAAPSPLEKSPSTAILCNTCGNVCKGEVLRVQDKYFHIKCFVCKACGCDLAEGGFFVRQGEYICTLDYQRLYGTRCFSCDQFIEGEVVSALGKTYHPDCFVCAVCRLPFPPGDRVTFNGKECMCQKCSLPVSVGSSAHLSQGLRSCGGCGTEIKNGQALVALDKHWHLGCFKCKSCGKLLNAEYISKDGLPYCEADYHAKFGIRCDSCEKYITGRVLEAGEKHYHPSCALCVRCGQMFAEGEEMYLQGSSIWHPACRQAARTEDRNKETRTSSESIISVPASSTSGSPSRVIYAKLGGEILDYRDLAALPKSKAIYDIDRPDMISYSPYISHSAGDRQSYGEGDQDDRSYKQCRTSSPSSTGSVSLGRYTPTSRSPQHYSRPGSESGRSTPSLSVLSDSKPPPSTYQQAPRHFHVPDTGVKDNIYRKPPIYRQHAARRSDGEDGSLDQDNRKKSSWLMLKGDADTRTNSPDLDTQSLSHSSGTDRDPLQRMAGDSFHSRFPYSKSDPLPGHGKNGLDQRNANLAPCGADPDASWGMREYKIYPYDSLIVTNRIRVKLPKDVDRTRLERHLSPEEFQEVFGMSIEEFDRLALWKRNDLKKKALLF.

LIM zinc-binding domains follow at residues 22-81 (ILCN…LYGT), 81-141 (TRCF…VSVG), 151-210 (RSCG…KFGI), and 210-270 (IRCD…ARTE). Cys83, Cys86, His103, Cys106, Cys109, Cys112, Cys131, and Cys134 together coordinate Zn(2+). 8 residues coordinate Zn(2+): Cys212, Cys215, His232, Cys235, Cys238, Cys241, His260, and Cys263. Residues 269-278 (TEDRNKETRT) show a composition bias toward basic and acidic residues. Disordered stretches follow at residues 269-295 (TEDR…SGSP) and 336-527 (YISH…DQRN). 2 stretches are compositionally biased toward low complexity: residues 279 to 295 (SSES…SGSP) and 363 to 372 (SSPSSTGSVS). Phosphoserine is present on residues Ser282, Ser294, Ser364, and Ser367. A compositionally biased stretch (polar residues) spans 393–404 (SGRSTPSLSVLS). The residue at position 452 (Ser452) is a Phosphoserine. A Phosphothreonine modification is found at Thr472. A compositionally biased stretch (polar residues) spans 473 to 488 (RTNSPDLDTQSLSHSS). Ser476 and Ser578 each carry phosphoserine. Residues 543–611 (MREYKIYPYD…NDLKKKALLF (69 aa)) enclose the HP domain.

Interacts with F-actin and ABRA. As to expression, highly expressed in skeletal muscle.

It is found in the cytoplasm. Functionally, may act as scaffold protein. May stimulate ABRA activity and ABRA-dependent SRF transcriptional activity. The protein is Actin-binding LIM protein 2 (ABLIM2) of Homo sapiens (Human).